We begin with the raw amino-acid sequence, 337 residues long: LIX1-like protein (337 aa).

Residues 1–64 (METMRAQRLQ…PLLLSGAPGL (64 aa)) are disordered. A compositionally biased stretch (low complexity) spans 26 to 38 (PGVTGAAAATATP). Residues 39-56 (PAGPPPAPPPPAPPPPPL) are compositionally biased toward pro residues.

It belongs to the LIX1 family.

The chain is LIX1-like protein (LIX1L) from Homo sapiens (Human).